The chain runs to 507 residues: Acetylcholine receptor subunit beta-type lev-1 (507 aa).

Residues 1–31 form the signal peptide; sequence MMLGGGGGCGAGGTWLGFLVFLAVSLRNHST. 3 N-linked (GlcNAc...) asparagine glycosylation sites follow: Asn-28, Asn-58, and Asn-109. Residues 32–138 are Extracellular-facing; it reads CEDIDAEDRL…NNADGNYEVS (107 aa). A helical transmembrane segment spans residues 139–159; the sequence is FMCNVLILSTGTVLWVPPAIY. Cys-163 and Cys-177 form a disulfide bridge. The next 3 helical transmembrane spans lie at 243–263, 271–291, and 305–325; these read VVLI…FYLP, GLTM…SKIL, and LLLT…ICNI. The segment at 373–392 is disordered; that stretch reads GPSVEENPMRSGEHHPLCRH. Positions 379 to 392 are enriched in basic and acidic residues; the sequence is NPMRSGEHHPLCRH. A helical membrane pass occupies residues 454 to 474; it reads FLLYGFFGATVGGTIGIIFTA.

The protein belongs to the ligand-gated ion channel (TC 1.A.9) family. Acetylcholine receptor (TC 1.A.9.1) subfamily. As to quaternary structure, interacts with unc-29. Component of nicotinic acetylcholine receptor composed of 2 non-alpha subunits lev-1 and unc-29, and 3 alpha subunits unc-38, unc-63 and lev-8.

It is found in the postsynaptic cell membrane. The protein resides in the cell membrane. In terms of biological role, non-alpha subunit of nicotinic acetylcholine receptor (nAChR). Involved in nAChR sensitivity to nicotine. The polypeptide is Acetylcholine receptor subunit beta-type lev-1 (lev-1) (Caenorhabditis elegans).